A 431-amino-acid chain; its full sequence is Adenylosuccinate synthetase (431 aa).

GTP contacts are provided by residues 13-19 (GDEGKGK) and 41-43 (GHT). Catalysis depends on Asp-14, which acts as the Proton acceptor. Mg(2+)-binding residues include Asp-14 and Gly-41. IMP contacts are provided by residues 14-17 (DEGK), 39-42 (NAGH), Thr-130, Arg-144, Gln-225, Thr-240, and Arg-304. Catalysis depends on His-42, which acts as the Proton donor. Position 300–306 (300–306 (ATTGRKR)) interacts with substrate. GTP contacts are provided by residues Arg-306, 332–334 (KLD), and 415–417 (STG).

It belongs to the adenylosuccinate synthetase family. In terms of assembly, homodimer. The cofactor is Mg(2+).

Its subcellular location is the cytoplasm. The catalysed reaction is IMP + L-aspartate + GTP = N(6)-(1,2-dicarboxyethyl)-AMP + GDP + phosphate + 2 H(+). It participates in purine metabolism; AMP biosynthesis via de novo pathway; AMP from IMP: step 1/2. Functionally, plays an important role in the de novo pathway of purine nucleotide biosynthesis. Catalyzes the first committed step in the biosynthesis of AMP from IMP. The polypeptide is Adenylosuccinate synthetase (Shewanella piezotolerans (strain WP3 / JCM 13877)).